Reading from the N-terminus, the 569-residue chain is MPTKIPRTNYAAMFGPTTGDKVRLADTDLIIEVERDHTIYGEEVKFGGGKVIRDGMGQSQVTRAQGAMDTVITNALIVDHTGIYKADVGLRDGRIARIGKAGNPDTQPGVDIIIGPSTEAIAGEGKILTAGGFDSHIHFIAPQQIDDALHSGVTTMLGGGTGPAHGTLATTCTPGSWHIGRMLQALDAFPMNFGISGKGNASQPAALVEMIEGGACAMKLHEDWGTTPGAIDCCLSVADDMDVQVMIHTDTLNESGFVENTVAAIKGRTIHAFHTEGAGGGHAPDIIKICGDANVLPSSTNPTRPFTVNTLEEHLDMLMVCHHLDKSIPEDVAFAESRIRRETIAAEDILHDMGAFSIIASDSQAMGRVGEVIIRTWQTADKMKKQRGALTEETGDNDNMRVRRYIAKYTINPAIAHGIAHEIGSIEVGKRADLCLWNPAFFGVKPEMVLMAGTIVCAQMGDTNASIPTPQPVYSRPMFGAFGRSVERSAVLFVSGAAKSANIGETLGLRKELIAVKGTRGIGKKDLILNDALPHIEVNPETYEVRADGELLTCQPAEVLPMAQRYFLF.

A Urease domain is found at 131–569 (GGFDSHIHFI…LPMAQRYFLF (439 aa)). Ni(2+) is bound by residues His136, His138, and Lys219. Position 219 is an N6-carboxylysine (Lys219). His221 is a binding site for substrate. His248 and His274 together coordinate Ni(2+). Residue His322 is the Proton donor of the active site. Asp362 contacts Ni(2+).

The protein belongs to the metallo-dependent hydrolases superfamily. Urease alpha subunit family. As to quaternary structure, heterotrimer of UreA (gamma), UreB (beta) and UreC (alpha) subunits. Three heterotrimers associate to form the active enzyme. Ni cation serves as cofactor. Post-translationally, carboxylation allows a single lysine to coordinate two nickel ions.

It localises to the cytoplasm. It carries out the reaction urea + 2 H2O + H(+) = hydrogencarbonate + 2 NH4(+). It functions in the pathway nitrogen metabolism; urea degradation; CO(2) and NH(3) from urea (urease route): step 1/1. This Roseobacter denitrificans (strain ATCC 33942 / OCh 114) (Erythrobacter sp. (strain OCh 114)) protein is Urease subunit alpha.